Here is a 142-residue protein sequence, read N- to C-terminus: Large ribosomal subunit protein uL13 (142 aa).

The protein belongs to the universal ribosomal protein uL13 family. Part of the 50S ribosomal subunit.

Functionally, this protein is one of the early assembly proteins of the 50S ribosomal subunit, although it is not seen to bind rRNA by itself. It is important during the early stages of 50S assembly. The polypeptide is Large ribosomal subunit protein uL13 (Buchnera aphidicola subsp. Schizaphis graminum (strain Sg)).